The chain runs to 382 residues: Protein arginine N-methyltransferase 2 (382 aa).

ANK repeat units follow at residues 22–46 (AAQTAAPSVLADLLAEGAPAWFQDD) and 48–80 (LGWSCLHYAAERKEPECLEVLLQGGAVWNAVDK). Residues 134 to 382 (KTSAGDNLVF…RLPIAKMSLI (249 aa)) form the RMT2 domain. Residues Phe-143, Met-177, 205-210 (FGLGIV), 228-230 (EAH), 255-256 (WQ), and Asp-284 each bind S-adenosyl-L-methionine.

Belongs to the class I-like SAM-binding methyltransferase superfamily. RMT2 methyltransferase family. As to quaternary structure, monomer.

It is found in the cytoplasm. Its subcellular location is the nucleus. Functionally, S-adenosyl-L-methionine-dependent protein-arginine N-methyltransferase that methylates the delta-nitrogen atom of arginine residues to form N5-methylarginine (type IV) in target proteins. Monomethylates ribosomal protein L12. In Cryptococcus neoformans var. neoformans serotype D (strain JEC21 / ATCC MYA-565) (Filobasidiella neoformans), this protein is Protein arginine N-methyltransferase 2.